Consider the following 159-residue polypeptide: MSDEQQQPVFSIEKVYVKDLSVEIPNAPRIYLERETPEVNIQLHSKSERIDETLYEVVLTTTVTAKIKDKTMFLVEIQQGGVFQIRHVPEAEMELVLGIACPNILFPYLREAVSDTVTRAGFHPVILNPVNFEALYYQRKQQTENSAAPQTPETQQITH.

This sequence belongs to the SecB family. In terms of assembly, homotetramer, a dimer of dimers. One homotetramer interacts with 1 SecA dimer.

It localises to the cytoplasm. In terms of biological role, one of the proteins required for the normal export of preproteins out of the cell cytoplasm. It is a molecular chaperone that binds to a subset of precursor proteins, maintaining them in a translocation-competent state. It also specifically binds to its receptor SecA. In Nitrosospira multiformis (strain ATCC 25196 / NCIMB 11849 / C 71), this protein is Protein-export protein SecB.